The sequence spans 215 residues: MSKAITIAEAQRYDAHATNVIGIPAMVLMERAALATFNNLLNDDFDLDRVVVVAATGNNGGDGIAVARLLKIRGIDVTIYLLGDPENATPQTSQQLKIANYYNIPVTADLNQIVNATLIVDAIFGVGLTRDVTGKFADAINAINAADAKTVAIDVPSGINADTGAVMGVAVVADSTTTMAYNKIGLLTTVGKQHAGTIHVADIGIYAQDRVEHAR.

The YjeF N-terminal domain occupies 10–211; sequence AQRYDAHATN…DIGIYAQDRV (202 aa). 58 to 62 contributes to the (6S)-NADPHX binding site; that stretch reads NNGGD. Asn59 and Asp121 together coordinate K(+). Residues 125 to 131 and Asp154 contribute to the (6S)-NADPHX site; that span reads GVGLTRD. Ser157 contacts K(+).

The protein belongs to the NnrE/AIBP family. K(+) serves as cofactor.

It catalyses the reaction (6R)-NADHX = (6S)-NADHX. The enzyme catalyses (6R)-NADPHX = (6S)-NADPHX. Functionally, catalyzes the epimerization of the S- and R-forms of NAD(P)HX, a damaged form of NAD(P)H that is a result of enzymatic or heat-dependent hydration. This is a prerequisite for the S-specific NAD(P)H-hydrate dehydratase to allow the repair of both epimers of NAD(P)HX. The polypeptide is NAD(P)H-hydrate epimerase (Levilactobacillus brevis (strain ATCC 367 / BCRC 12310 / CIP 105137 / JCM 1170 / LMG 11437 / NCIMB 947 / NCTC 947) (Lactobacillus brevis)).